The chain runs to 397 residues: MSPTTDRIAVVGGSISGLTAALMLRDAGVDVDVYERSPQPLSGFGTGIVVQPELVHYLLEQGVELDSISVPSSSMEYVDALTGERVGSVPADWRFTSYDSIYGGLYELFGPERYHTSKCLVGLSQDSETVQMRFSDGTKAEANWVIGADGGASVVRKRLLGIEPTYAGYVTWRGVLQPGEVADDVWNYFNDKFTYGLLDDGHLIAYPIPGRENAESPRLNFQWYWNVAEGPDLDELMTDVRGIRLPTSVHNNSLNPHNLRQFHSKGESLFKPFRDLVLNASSPFVTVVADATVDRMVHGRVLLIGDAAVTPRPHAAAGGAKACDDARTLAEVFTKNHDLRGSLQSWETRQLQQGHAYLNKVKKMASRLQHGGSFEPGNPAFAFGLPKVDEPSVVTNS.

Residues 14–16 (SIS), 35–36 (ER), valine 49, leucine 120, aspartate 306, and 316–320 (AAGGA) each bind FAD.

Homodimer. The cofactor is FAD.

The enzyme catalyses 2,6-dihydroxypyridine + NADH + O2 + H(+) = 2,3,6-trihydroxypyridine + NAD(+) + H2O. It functions in the pathway alkaloid degradation; nicotine degradation. Its function is as follows. Catalyzes the conversion of 2,6-dihydroxypyridine into 2,3,6-trihydroxypyridine in the nicotine degradation pathway. The chain is 2,6-dihydroxypyridine 3-monooxygenase (dhpH) from Paenarthrobacter nicotinovorans (Arthrobacter nicotinovorans).